A 137-amino-acid polypeptide reads, in one-letter code: Small ribosomal subunit protein bS18c (137 aa).

It belongs to the bacterial ribosomal protein bS18 family. As to quaternary structure, part of the 30S ribosomal subunit.

It is found in the plastid. The protein resides in the chloroplast. The chain is Small ribosomal subunit protein bS18c (rps18) from Chlamydomonas reinhardtii (Chlamydomonas smithii).